Consider the following 117-residue polypeptide: Large ribosomal subunit protein bL19 (117 aa).

It belongs to the bacterial ribosomal protein bL19 family.

In terms of biological role, this protein is located at the 30S-50S ribosomal subunit interface and may play a role in the structure and function of the aminoacyl-tRNA binding site. This is Large ribosomal subunit protein bL19 from Leptothrix cholodnii (strain ATCC 51168 / LMG 8142 / SP-6) (Leptothrix discophora (strain SP-6)).